The following is a 79-amino-acid chain: MWYELTSAKTNESLPRSTRMYSGGNLKNAQFSLLSSRELVNSYFDVNSGGGLDGVLSINRSSFIFCTTEVILGIGVRIR.

The protein is Protein B6 (B6) of Human herpesvirus 6B (strain Z29) (HHV-6 variant B).